A 340-amino-acid chain; its full sequence is DNA primase large subunit PriL (340 aa).

Residues Cys229, Cys301, Cys310, and Cys318 each contribute to the [4Fe-4S] cluster site.

The protein belongs to the eukaryotic-type primase large subunit family. Heterodimer of a small subunit (PriS) and a large subunit (PriL). It depends on [4Fe-4S] cluster as a cofactor.

Functionally, regulatory subunit of DNA primase, an RNA polymerase that catalyzes the synthesis of short RNA molecules used as primers for DNA polymerase during DNA replication. Stabilizes and modulates the activity of the small subunit, increasing the rate of DNA synthesis, and conferring RNA synthesis capability. The DNA polymerase activity may enable DNA primase to also catalyze primer extension after primer synthesis. May also play a role in DNA repair. The polypeptide is DNA primase large subunit PriL (Thermoplasma acidophilum (strain ATCC 25905 / DSM 1728 / JCM 9062 / NBRC 15155 / AMRC-C165)).